The primary structure comprises 427 residues: Glutamate-1-semialdehyde 2,1-aminomutase (427 aa).

K265 carries the N6-(pyridoxal phosphate)lysine modification.

It belongs to the class-III pyridoxal-phosphate-dependent aminotransferase family. HemL subfamily. Homodimer. Pyridoxal 5'-phosphate is required as a cofactor.

It is found in the cytoplasm. It carries out the reaction (S)-4-amino-5-oxopentanoate = 5-aminolevulinate. The protein operates within porphyrin-containing compound metabolism; protoporphyrin-IX biosynthesis; 5-aminolevulinate from L-glutamyl-tRNA(Glu): step 2/2. The protein is Glutamate-1-semialdehyde 2,1-aminomutase of Burkholderia ambifaria (strain MC40-6).